The chain runs to 1480 residues: MQRSPLEKASVVSKLFFSWTRPILKKGYRQRLELSDIYQIPSADSADNLSEKLEREWDRELASKKNPKLINALRRCFFWRFMFYGIFLYLGEVTKAVQPLLLGRIIASYDPDNKEERSIAIYLGIGLCLLFIVRTLLLHPAIFGLHHIGMQMRIAMFSLIYKKTLKLSSRVLDKISIGQLVSLLSNNLNKFDEGLALAHFVWIAPLQVALLMGLIWELLQASAFCGLGFLIVLALFQAGLGRMMMKYRDQRAGKINERLVITSEMIENIQSVKAYCWEEAMEKMIENLRQTELKLTRKAAYVRYFNSSAFFFSGFFVVFLSVLPYALIKGIVLRKIFTTISFCIVLRMAVTRQFPWAVQTWYDSLGAINKIQDFLQKQEYKTLEYNLTTTEVVMENVTAFWEEGFGELFEKAKQNNNNRETSNGDDSLFFSNFSLLGTPVLKDINFKIERGQLLAVAGSTGAGKTSLLMMIMGELEPSEGKIKHSGRISFCSQFSWIMPGTIKENIIFGVSYDEYRYRSVIKACQLEEDISKFAEKDNIVLGEGGITLSGGQRARISLARAVYKDADLYLLDSPFGYLDVLTEKEIFESCVCKLMANKTRILVTSKMEHLKKADKILILHEGSSYFYGTFSELQNLRPDFSSKLMGCDSFDQFSAERRNSILTETLRRFSLEGDAPVSWTETKKQPFKQTGEFGEKRKNSILNPINSIRKFSIVQKTPLQMNGIEEDSDEPFERRVSLVPDSEQGEAILPRISVISTGPMLQARRRQSVLNLMTQSVNQGQNIHRKTTASTRKVSLAPQANLTELDIYSRRLSQETGLEISEEINEEDLKECFFDDMESIPAVTTWNTYLRYITVHKSLIFVLIWCLVIFLAEVAASLVVLWLLGNTPLQDKGNSTHSRNNSYAVIITSTSSYYVFYIYVGVADTLLAMGFFRGLPLVHTLITVSKILHNKMLHSVLQAPMSTLNTLKAGGILNRFSKDIAILDDLLPLTIFDFIQLLLIVIGAIAVVAVLQPYIFVATVPVIVAFIMLRAYFLQTSQQLKQLESEGRSPIFTHLVTSLKGLWTLRAFGRQPYFETLFHKALNLHTANWFLYLSTLRWFQMRIEMIFVIFFIAVTFISILTTGEGEGRVGIILTLAMNIMSTLQWAVNSSIDVDSLMRSVSRVFKFIDMPTEGKPTKSTKPYKNGQLSKLMIIENSHVKKDDIWPSGGQMTVKDLTAKYTEGGNAILENISFSISPGQRVGLLGRTGSGKSTLLSAFLRLLNTEGEIQIDGVSWDSITLQQWRKAFGVIPQKVFIFSGTFRKNLDPYEQWSDQEIWKVADEVGLRSVIEQFPGKLDFVLVDGGCVLSHGHKQLMCLARSVLSKAKILLLDEPSAHLDPVTYQIIRRTLKQAFADCTVILCEHRIEAMLECQQFLVIEENKVRQYDSIQKLLNERSLFQQAISPSDRVKLFPHRNSSKCKSKPQIAALKEETEEEVQDTRL.

Residues 1 to 77 are Cytoplasmic-facing; it reads MQRSPLEKAS…KLINALRRCF (77 aa). A helical transmembrane segment spans residues 78-98; the sequence is FWRFMFYGIFLYLGEVTKAVQ. The ABC transmembrane type-1 1 domain maps to 81 to 365; sequence FMFYGIFLYL…WAVQTWYDSL (285 aa). The Extracellular portion of the chain corresponds to 99 to 122; it reads PLLLGRIIASYDPDNKEERSIAIY. Residues 123-146 form a helical membrane-spanning segment; sequence LGIGLCLLFIVRTLLLHPAIFGLH. Topologically, residues 147-195 are cytoplasmic; the sequence is HIGMQMRIAMFSLIYKKTLKLSSRVLDKISIGQLVSLLSNNLNKFDEGL. The helical transmembrane segment at 196 to 216 threads the bilayer; the sequence is ALAHFVWIAPLQVALLMGLIW. At 217–222 the chain is on the extracellular side; that stretch reads ELLQAS. The chain crosses the membrane as a helical span at residues 223 to 243; sequence AFCGLGFLIVLALFQAGLGRM. At 244-298 the chain is on the cytoplasmic side; sequence MMKYRDQRAGKINERLVITSEMIENIQSVKAYCWEEAMEKMIENLRQTELKLTRK. A helical transmembrane segment spans residues 299–319; that stretch reads AAYVRYFNSSAFFFSGFFVVF. At 320–339 the chain is on the extracellular side; the sequence is LSVLPYALIKGIVLRKIFTT. A helical transmembrane segment spans residues 340 to 358; sequence ISFCIVLRMAVTRQFPWAV. Residues 359–858 lie on the Cytoplasmic side of the membrane; it reads QTWYDSLGAI…YLRYITVHKS (500 aa). ATP is bound by residues Trp-401, Ser-434, 458-465, and Gln-493; that span reads GSTGAGKT. One can recognise an ABC transporter 1 domain in the interval 423–646; it reads NGDDSLFFSN…RPDFSSKLMG (224 aa). Cys-524 carries the S-palmitoyl cysteine lipid modification. A phosphoserine mark is found at Ser-549 and Ser-660. The segment at 654–831 is disordered R region; it reads SAERRNSILT…EEINEEDLKE (178 aa). Ser-670 is subject to Phosphoserine; by PKA. Residue Lys-688 forms a Glycyl lysine isopeptide (Lys-Gly) (interchain with G-Cter in ubiquitin) linkage. Ser-700 and Ser-712 each carry phosphoserine. At Thr-717 the chain carries Phosphothreonine. Phosphoserine occurs at positions 737, 753, 768, 790, 795, and 813. A helical transmembrane segment spans residues 859-879; it reads LIFVLIWCLVIFLAEVAASLV. The region spanning 859 to 1155 is the ABC transmembrane type-1 2 domain; the sequence is LIFVLIWCLV…AVNSSIDVDS (297 aa). Topologically, residues 880–918 are extracellular; it reads VLWLLGNTPLQDKGNSTHSRNNSYAVIITSTSSYYVFYI. Residues Asn-894 and Asn-900 are each glycosylated (N-linked (GlcNAc...) asparagine). A discontinuously helical transmembrane segment spans residues 919–939; the sequence is YVGVADTLLAMGFFRGLPLVH. At 940-990 the chain is on the cytoplasmic side; it reads TLITVSKILHNKMLHSVLQAPMSTLNTLKAGGILNRFSKDIAILDDLLPLT. Residues 991–1011 form a helical membrane-spanning segment; sequence IFDFIQLLLIVIGAIAVVAVL. Over 1012-1013 the chain is Extracellular; that stretch reads QP. The chain crosses the membrane as a helical span at residues 1014 to 1034; that stretch reads YIFVATVPVIVAFIMLRAYFL. At 1035–1095 the chain is on the cytoplasmic side; sequence QTSQQLKQLE…TANWFLYLST (61 aa). A helical transmembrane segment spans residues 1096 to 1116; that stretch reads LRWFQMRIEMIFVIFFIAVTF. Over 1117-1130 the chain is Extracellular; it reads ISILTTGEGEGRVG. The chain crosses the membrane as a helical span at residues 1131–1151; the sequence is IILTLAMNIMSTLQWAVNSSI. The Cytoplasmic segment spans residues 1152 to 1480; sequence DVDSLMRSVS…TEEEVQDTRL (329 aa). Residues 1210–1443 enclose the ABC transporter 2 domain; the sequence is MTVKDLTAKY…RSLFQQAISP (234 aa). Residues Tyr-1219 and 1244-1251 each bind ATP; that span reads GRTGSGKS. The segment at 1386–1480 is interaction with GORASP2; the sequence is RTLKQAFADC…TEEEVQDTRL (95 aa). The S-palmitoyl cysteine moiety is linked to residue Cys-1395. 2 positions are modified to phosphoserine: Ser-1444 and Ser-1456. The disordered stretch occupies residues 1452 to 1480; it reads HRNSSKCKSKPQIAALKEETEEEVQDTRL. Residues 1470–1480 are compositionally biased toward acidic residues; the sequence is ETEEEVQDTRL. Residues 1478-1480 carry the PDZ-binding motif; that stretch reads TRL.

This sequence belongs to the ABC transporter superfamily. ABCC family. CFTR transporter (TC 3.A.1.202) subfamily. Monomer; does not require oligomerization for channel activity. May form oligomers in the membrane. Interacts with SLC26A3, SLC26A6 and NHERF1. Interacts with SHANK2. Interacts with MYO6. Interacts (via C-terminus) with GOPC (via PDZ domain); this promotes CFTR internalization and thereby decreases channel activity. Interacts with SLC4A7 through NHERF1. Found in a complex with MYO5B and RAB11A. Interacts with ANO1. Interacts with SLC26A8. Interacts with AHCYL1; the interaction increases CFTR activity. Interacts with CSE1L. The core-glycosylated form interacts with GORASP2 (via PDZ GRASP-type 1 domain) in respone to ER stress. Interacts with MARCHF2; the interaction leads to CFTR ubiqtuitination and degradation. Interacts with ADGRG2. Post-translationally, N-glycosylated. In terms of processing, phosphorylated; cAMP treatment promotes phosphorylation and activates the channel. Dephosphorylation decreases the ATPase activity (in vitro). Phosphorylation at PKA sites activates the channel. Phosphorylation at PKC sites enhances the response to phosphorylation by PKA. Phosphorylated by AMPK; this inhibits channel activity. Ubiquitinated, leading to its degradation in the lysosome. Deubiquitination by USP10 in early endosomes enhances its endocytic recycling to the cell membrane. Ubiquitinated by RNF185 during ER stress. Ubiquitinated by MARCHF2.

It localises to the apical cell membrane. The protein localises to the early endosome membrane. Its subcellular location is the cell membrane. The protein resides in the recycling endosome membrane. It is found in the endoplasmic reticulum membrane. It localises to the nucleus. It catalyses the reaction ATP + H2O + closed Cl(-) channel = ADP + phosphate + open Cl(-) channel.. The catalysed reaction is chloride(in) = chloride(out). It carries out the reaction hydrogencarbonate(in) = hydrogencarbonate(out). The enzyme catalyses ATP + H2O = ADP + phosphate + H(+). In terms of biological role, epithelial ion channel that plays an important role in the regulation of epithelial ion and water transport and fluid homeostasis. Mediates the transport of chloride ions across the cell membrane. Possesses an intrinsic ATPase activity and utilizes ATP to gate its channel; the passive flow of anions through the channel is gated by cycles of ATP binding and hydrolysis by the ATP-binding domains. The ion channel is also permeable to HCO(3)(-); selectivity depends on the extracellular chloride concentration. Exerts its function also by modulating the activity of other ion channels and transporters. Contributes to the regulation of the pH and the ion content of the epithelial fluid layer. Modulates the activity of the epithelial sodium channel (ENaC) complex, in part by regulating the cell surface expression of the ENaC complex. May regulate bicarbonate secretion and salvage in epithelial cells by regulating the transporter SLC4A7. Can inhibit the chloride channel activity of ANO1. Plays a role in the chloride and bicarbonate homeostasis during sperm epididymal maturation and capacitation. In Pongo abelii (Sumatran orangutan), this protein is Cystic fibrosis transmembrane conductance regulator.